Here is a 450-residue protein sequence, read N- to C-terminus: Phosphoglucosamine mutase (450 aa).

Catalysis depends on serine 102, which acts as the Phosphoserine intermediate. Residues serine 102, aspartate 244, aspartate 246, and aspartate 248 each contribute to the Mg(2+) site. Position 102 is a phosphoserine (serine 102).

The protein belongs to the phosphohexose mutase family. Mg(2+) serves as cofactor. Activated by phosphorylation.

The catalysed reaction is alpha-D-glucosamine 1-phosphate = D-glucosamine 6-phosphate. Functionally, catalyzes the conversion of glucosamine-6-phosphate to glucosamine-1-phosphate. The polypeptide is Phosphoglucosamine mutase (Syntrophomonas wolfei subsp. wolfei (strain DSM 2245B / Goettingen)).